We begin with the raw amino-acid sequence, 301 residues long: 3-methyl-2-oxobutanoate hydroxymethyltransferase (301 aa).

A compositionally biased stretch (low complexity) spans 1-28; the sequence is MATSNSSDSSMSAEVPAPYGNGPANAPA. Residues 1–37 are disordered; it reads MATSNSSDSSMSAEVPAPYGNGPANAPATPSDTAKKP. 2 residues coordinate Mg(2+): Asp82 and Asp121. 3-methyl-2-oxobutanoate is bound by residues 82 to 83, Asp121, and Lys151; that span reads DS. Glu153 contributes to the Mg(2+) binding site. Glu219 acts as the Proton acceptor in catalysis.

This sequence belongs to the PanB family. In terms of assembly, homodecamer; pentamer of dimers. Mg(2+) serves as cofactor.

The protein resides in the cytoplasm. The enzyme catalyses 3-methyl-2-oxobutanoate + (6R)-5,10-methylene-5,6,7,8-tetrahydrofolate + H2O = 2-dehydropantoate + (6S)-5,6,7,8-tetrahydrofolate. Its pathway is cofactor biosynthesis; (R)-pantothenate biosynthesis; (R)-pantoate from 3-methyl-2-oxobutanoate: step 1/2. In terms of biological role, catalyzes the reversible reaction in which hydroxymethyl group from 5,10-methylenetetrahydrofolate is transferred onto alpha-ketoisovalerate to form ketopantoate. This Arthrobacter sp. (strain FB24) protein is 3-methyl-2-oxobutanoate hydroxymethyltransferase.